A 319-amino-acid polypeptide reads, in one-letter code: Acetyl-coenzyme A carboxylase carboxyl transferase subunit alpha (319 aa).

The 262-residue stretch at 32–293 (NVDAEVRALR…KAVLLNELDA (262 aa)) folds into the CoA carboxyltransferase C-terminal domain.

Belongs to the AccA family. Acetyl-CoA carboxylase is a heterohexamer composed of biotin carboxyl carrier protein (AccB), biotin carboxylase (AccC) and two subunits each of ACCase subunit alpha (AccA) and ACCase subunit beta (AccD).

The protein resides in the cytoplasm. The catalysed reaction is N(6)-carboxybiotinyl-L-lysyl-[protein] + acetyl-CoA = N(6)-biotinyl-L-lysyl-[protein] + malonyl-CoA. It participates in lipid metabolism; malonyl-CoA biosynthesis; malonyl-CoA from acetyl-CoA: step 1/1. Functionally, component of the acetyl coenzyme A carboxylase (ACC) complex. First, biotin carboxylase catalyzes the carboxylation of biotin on its carrier protein (BCCP) and then the CO(2) group is transferred by the carboxyltransferase to acetyl-CoA to form malonyl-CoA. This chain is Acetyl-coenzyme A carboxylase carboxyl transferase subunit alpha, found in Xanthomonas campestris pv. campestris (strain B100).